Here is a 51-residue protein sequence, read N- to C-terminus: Small ribosomal subunit protein eS31 (51 aa).

Zn(2+) is bound by residues Cys-21, Cys-24, Cys-39, and Cys-42. The C4-type zinc-finger motif lies at Cys-21–Cys-42.

The protein belongs to the eukaryotic ribosomal protein eS31 family. As to quaternary structure, part of the 30S ribosomal subunit. It depends on Zn(2+) as a cofactor.

The polypeptide is Small ribosomal subunit protein eS31 (Methanothermobacter thermautotrophicus (strain ATCC 29096 / DSM 1053 / JCM 10044 / NBRC 100330 / Delta H) (Methanobacterium thermoautotrophicum)).